A 512-amino-acid chain; its full sequence is Secreted triacylglycerol lipase LIP5 (512 aa).

The first 17 residues, 1 to 17 (MMYASLVHWLALAVALA), serve as a signal peptide directing secretion. A disulfide bond links C118 and C292. Residue S203 is the Nucleophile of the active site. N316 is a glycosylation site (N-linked (GlcNAc...) asparagine). D352 is an active-site residue. N361 is a glycosylation site (N-linked (GlcNAc...) asparagine). H386 is an active-site residue. A glycan (N-linked (GlcNAc...) asparagine) is linked at N453. Residues 480 to 512 (KGDISPGEGGDHTKESKKAAAKFKAEKKHGKHH) are disordered. The segment covering 488-497 (GGDHTKESKK) has biased composition (basic and acidic residues). A compositionally biased stretch (basic residues) spans 498-512 (AAAKFKAEKKHGKHH).

It belongs to the AB hydrolase superfamily. Lipase family. Class Lip subfamily.

The protein resides in the secreted. The catalysed reaction is a triacylglycerol + H2O = a diacylglycerol + a fatty acid + H(+). The enzyme catalyses a monoacylglycerol + H2O = glycerol + a fatty acid + H(+). It carries out the reaction a diacylglycerol + H2O = a monoacylglycerol + a fatty acid + H(+). Its function is as follows. Secreted lipase that hydrolyzes acylglycerol lipids such as triacylglycerols and consequently releases free fatty acid. Can hydrolyze 4-nitrophenyl palmitate to release 4-nitrophenol and palmitoic acid. Due to an absence of fatty acid synthase genes in Malassezia species, secretory lipases are essential for the yeast to generate free fatty acids from degradation of sebum and assimilate them as lipid sources for growth. Plays an essential role at the pathogen-host interface during disease progression. In Malassezia restricta (strain ATCC 96810 / NBRC 103918 / CBS 7877) (Seborrheic dermatitis infection agent), this protein is Secreted triacylglycerol lipase LIP5.